A 152-amino-acid chain; its full sequence is Maintenance of carboxysome distribution protein B (152 aa).

Self-associates, interacts with McdA probably via the C-terminus of both proteins. Homohexamerizes. Probably a trimer of dimers. Interacts with most of the shell components of the carboxysome (CcmK2, CcmK3, CcmK4, CcmL and CcmO, but not CcmP) via its C-terminus.

It localises to the carboxysome. Functionally, mcdA and McdB together mediate carboxysome (Cb) spacing, size, ultrastructure and probably inheritance in the cell. Together they prevent Cb aggregation. McdA is an ATPase that forms dynamic gradients on the nucleoid in response to adapter protein McdB, which associates with carboxysomes. The interplay between McdA gradients on the nucleoid and McdB-bound carboxysomes result in the equal spacing of Cbs along the cell length. McdB may have an additional function in cell divison. Stimulates the ATPase activity of McdA, causing McdA to be released from DNA. Overexpression leads to loss of McdA oscillation and formation of large Cb aggregates which colocalize with McdB, as well as diffuse McdB staining in the cytoplasm. Undergoes liquid-liquid phase separation between pH 6.5-7.5 and at concentrations between 1 uM and 167 uM. Forms polar foci upon overexpression in E.coli. In terms of biological role, incorrect positioning (aggregation) of carboxysomes results in reduced CO(2) fixation by encapsulated RuBisCO, which leads to slower growth, cell elongation, asymmetric cell division and an increase in RuBisCO levels. The chain is Maintenance of carboxysome distribution protein B from Synechococcus elongatus (strain ATCC 33912 / PCC 7942 / FACHB-805) (Anacystis nidulans R2).